The following is a 372-amino-acid chain: UDP-N-acetylenolpyruvoylglucosamine reductase (372 aa).

The region spanning 29–205 is the FAD-binding PCMH-type domain; sequence VGPTARRLIT…LEVEFALDAS (177 aa). The active site involves arginine 177. The active-site Proton donor is the serine 260. The active site involves glutamate 364.

It belongs to the MurB family. FAD is required as a cofactor.

The protein localises to the cytoplasm. It catalyses the reaction UDP-N-acetyl-alpha-D-muramate + NADP(+) = UDP-N-acetyl-3-O-(1-carboxyvinyl)-alpha-D-glucosamine + NADPH + H(+). It participates in cell wall biogenesis; peptidoglycan biosynthesis. In terms of biological role, cell wall formation. This chain is UDP-N-acetylenolpyruvoylglucosamine reductase, found in Mycobacterium avium (strain 104).